We begin with the raw amino-acid sequence, 337 residues long: Eukaryotic translation initiation factor 3 subunit H (337 aa).

The MPN domain occupies 21–153 (VQCDGLAVMK…LKAYRLTPQA (133 aa)).

The protein belongs to the eIF-3 subunit H family. As to quaternary structure, component of the eukaryotic translation initiation factor 3 (eIF-3) complex. The eIF-3 complex interacts with pix. Interacts with mxt.

The protein localises to the cytoplasm. In terms of biological role, component of the eukaryotic translation initiation factor 3 (eIF-3) complex, which is involved in protein synthesis of a specialized repertoire of mRNAs and, together with other initiation factors, stimulates binding of mRNA and methionyl-tRNAi to the 40S ribosome. The eIF-3 complex specifically targets and initiates translation of a subset of mRNAs involved in cell proliferation. The sequence is that of Eukaryotic translation initiation factor 3 subunit H from Drosophila ananassae (Fruit fly).